Reading from the N-terminus, the 359-residue chain is Protein RecA (359 aa).

Position 69–76 (69–76) interacts with ATP; it reads GPESSGKT. Residues 337-359 are disordered; the sequence is SANSVAKASEEDEEEEVDLEPEE. Positions 346 to 359 are enriched in acidic residues; the sequence is EEDEEEEVDLEPEE.

The protein belongs to the RecA family.

It localises to the cytoplasm. In terms of biological role, can catalyze the hydrolysis of ATP in the presence of single-stranded DNA, the ATP-dependent uptake of single-stranded DNA by duplex DNA, and the ATP-dependent hybridization of homologous single-stranded DNAs. It interacts with LexA causing its activation and leading to its autocatalytic cleavage. In Nostoc punctiforme (strain ATCC 29133 / PCC 73102), this protein is Protein RecA.